The following is a 371-amino-acid chain: Queuine tRNA-ribosyltransferase (371 aa).

The Proton acceptor role is filled by Asp93. Substrate is bound by residues 93–97 (DSGGF), Asp147, Gln191, and Gly218. The tract at residues 249–255 (GVGTPLD) is RNA binding. Asp268 serves as the catalytic Nucleophile. The interval 273–277 (TRNAR) is RNA binding; important for wobble base 34 recognition. Residues Cys306, Cys308, Cys311, and His337 each coordinate Zn(2+).

It belongs to the queuine tRNA-ribosyltransferase family. Homodimer. Within each dimer, one monomer is responsible for RNA recognition and catalysis, while the other monomer binds to the replacement base PreQ1. It depends on Zn(2+) as a cofactor.

It carries out the reaction 7-aminomethyl-7-carbaguanine + guanosine(34) in tRNA = 7-aminomethyl-7-carbaguanosine(34) in tRNA + guanine. Its pathway is tRNA modification; tRNA-queuosine biosynthesis. Functionally, catalyzes the base-exchange of a guanine (G) residue with the queuine precursor 7-aminomethyl-7-deazaguanine (PreQ1) at position 34 (anticodon wobble position) in tRNAs with GU(N) anticodons (tRNA-Asp, -Asn, -His and -Tyr). Catalysis occurs through a double-displacement mechanism. The nucleophile active site attacks the C1' of nucleotide 34 to detach the guanine base from the RNA, forming a covalent enzyme-RNA intermediate. The proton acceptor active site deprotonates the incoming PreQ1, allowing a nucleophilic attack on the C1' of the ribose to form the product. After dissociation, two additional enzymatic reactions on the tRNA convert PreQ1 to queuine (Q), resulting in the hypermodified nucleoside queuosine (7-(((4,5-cis-dihydroxy-2-cyclopenten-1-yl)amino)methyl)-7-deazaguanosine). The chain is Queuine tRNA-ribosyltransferase from Lawsonia intracellularis (strain PHE/MN1-00).